A 193-amino-acid chain; its full sequence is Phosphoheptose isomerase (193 aa).

The 157-residue stretch at 37–193 folds into the SIS domain; the sequence is IAQSFKNEKK…LIIEKEMQKN (157 aa). Residue 52–54 participates in substrate binding; it reads NGG. Zn(2+) contacts are provided by histidine 61 and glutamate 65. Residues glutamate 65, 93–94, 119–121, serine 124, and glutamine 172 each bind substrate; these read ND and STS. 2 residues coordinate Zn(2+): glutamine 172 and histidine 180.

The protein belongs to the SIS family. GmhA subfamily. In terms of assembly, homotetramer. Zn(2+) serves as cofactor.

The protein resides in the cytoplasm. The catalysed reaction is 2 D-sedoheptulose 7-phosphate = D-glycero-alpha-D-manno-heptose 7-phosphate + D-glycero-beta-D-manno-heptose 7-phosphate. It participates in carbohydrate biosynthesis; D-glycero-D-manno-heptose 7-phosphate biosynthesis; D-glycero-alpha-D-manno-heptose 7-phosphate and D-glycero-beta-D-manno-heptose 7-phosphate from sedoheptulose 7-phosphate: step 1/1. Its function is as follows. Catalyzes the isomerization of sedoheptulose 7-phosphate in D-glycero-D-manno-heptose 7-phosphate. This is Phosphoheptose isomerase from Buchnera aphidicola subsp. Acyrthosiphon pisum (strain 5A).